Here is a 457-residue protein sequence, read N- to C-terminus: Pancreatic triacylglycerol lipase (457 aa).

The signal sequence occupies residues 1–7 (LLLGAVA). Cystine bridges form between cysteine 12–cysteine 18 and cysteine 99–cysteine 110. Serine 161 (nucleophile) is an active-site residue. The Charge relay system role is filled by aspartate 185. Ca(2+) contacts are provided by glutamate 196, arginine 199, aspartate 201, and aspartate 204. A disulfide bridge links cysteine 246 with cysteine 270. The Charge relay system role is filled by histidine 272. 2 disulfides stabilise this stretch: cysteine 294/cysteine 305 and cysteine 308/cysteine 313. An N-linked (GlcNAc...) asparagine glycan is attached at asparagine 343. The PLAT domain maps to 347-457 (WRYQIAVTLS…EDILLTLTPC (111 aa)). Cysteine 441 and cysteine 457 are oxidised to a cystine.

Belongs to the AB hydrolase superfamily. Lipase family. In terms of assembly, forms a 1:1 stoichiometric complex with (pro)colipase/CLPS.

The protein localises to the secreted. It catalyses the reaction a triacylglycerol + H2O = a diacylglycerol + a fatty acid + H(+). The catalysed reaction is 1,2,3-tributanoylglycerol + H2O = dibutanoylglycerol + butanoate + H(+). The enzyme catalyses 1,2,3-tri-(9Z-octadecenoyl)-glycerol + H2O = di-(9Z)-octadecenoylglycerol + (9Z)-octadecenoate + H(+). It carries out the reaction all-trans-retinyl hexadecanoate + H2O = all-trans-retinol + hexadecanoate + H(+). It catalyses the reaction 1,2-di-(9Z-octadecenoyl)-glycerol + H2O = (9Z-octadecenoyl)-glycerol + (9Z)-octadecenoate + H(+). Its activity is regulated as follows. Inhibited by bile salts, is reactivated by (pro)colipase/CLPS. Functionally, plays an important role in fat metabolism. It preferentially splits the esters of long-chain fatty acids at positions 1 and 3, producing mainly 2-monoacylglycerol and free fatty acids, and shows considerably higher activity against insoluble emulsified substrates than against soluble ones. The protein is Pancreatic triacylglycerol lipase (PNLIP) of Myocastor coypus (Coypu).